The sequence spans 707 residues: Polyribonucleotide nucleotidyltransferase (707 aa).

Aspartate 486 and aspartate 492 together coordinate Mg(2+). The 60-residue stretch at 553-612 (PRIHIIKINPEKIKDVIGKGGSVIRMLTEETGTIIEIEDDGTVKISSTVKEKAKNAIRRI) folds into the KH domain. The S1 motif domain maps to 622–690 (GRIYSGKVTR…RQGRLRLSIK (69 aa)).

It belongs to the polyribonucleotide nucleotidyltransferase family. Component of the RNA degradosome, which is a multiprotein complex involved in RNA processing and mRNA degradation. It depends on Mg(2+) as a cofactor.

The protein resides in the cytoplasm. It carries out the reaction RNA(n+1) + phosphate = RNA(n) + a ribonucleoside 5'-diphosphate. Functionally, involved in mRNA degradation. Catalyzes the phosphorolysis of single-stranded polyribonucleotides processively in the 3'- to 5'-direction. This Buchnera aphidicola subsp. Acyrthosiphon pisum (strain 5A) protein is Polyribonucleotide nucleotidyltransferase.